A 252-amino-acid chain; its full sequence is Ribosomal RNA small subunit methyltransferase A (252 aa).

Residues N11, L13, G38, E60, D82, and N99 each coordinate S-adenosyl-L-methionine.

It belongs to the class I-like SAM-binding methyltransferase superfamily. rRNA adenine N(6)-methyltransferase family. RsmA subfamily.

The protein resides in the cytoplasm. It catalyses the reaction adenosine(1518)/adenosine(1519) in 16S rRNA + 4 S-adenosyl-L-methionine = N(6)-dimethyladenosine(1518)/N(6)-dimethyladenosine(1519) in 16S rRNA + 4 S-adenosyl-L-homocysteine + 4 H(+). Its function is as follows. Specifically dimethylates two adjacent adenosines (A1518 and A1519) in the loop of a conserved hairpin near the 3'-end of 16S rRNA in the 30S particle. May play a critical role in biogenesis of 30S subunits. This chain is Ribosomal RNA small subunit methyltransferase A, found in Hydrogenobaculum sp. (strain Y04AAS1).